The sequence spans 928 residues: MRFSANIAIIVNIIFLFIVVEFVLPTFIRSGDVRFRRYYRNNGRVSRAATAKKERIWPEGIIPFVIASNFSGEHQHLFLRAMRHWENFTCVSFVPRQPHHKHYITFTVDKCGCCSYVGRRGEGPQAISIGKNCDKFGIVVHELGHVVGFWHEHTRPDRDMYVDIFYKSIQTGQDYNFEKSKPEEVDSLGEPYDFSSIMHYARDTFSRGAFYDTILPKPNSGFRLEIGQRVQLSEGDIRQTKKLYKCAECGGTLMQESGNLAIQHAGVCTWHIISPQGHTIFLNITGSTLSPPSSLCGKEEDNVITVRDGVSISSPVLDRICGGDSLFRTIASSGNRMLIQVRSSTPAASLPFATYYAICGGPIYANEGVIHSPKYPESYPPNSDCQWTIHVDENSQVAIEFVYFHLEQHKECIYDRLILTEGISKNSKKDGKEMSETFCGLIEKKTIVSKTNQISLRFFSDNSVQKTGFELRFTKELNECATDKNICHHYCVNTVGGFKCACRVGYSLSSNGFSCDSTCGGYLKASNGSISSPNFPEMYPNSKTCIWEIEAPDGYHIFLNFTKFNVEGMKTECAYDYVKIGDSEKLCGEYHEALLFTTPRNRVRIEFSSDSSVERDGFFANFIADFDECQNDNAGCEHTCQNRLGSYVCTCNPGYILAEDKHNCKEGSCFFEVNAPAGDINSPNYPNDYPKGQNCSWHFVTTPGHRLMLTFSSFQVEEHAQCKYDAVSVYDGGDGSAQLAGVFCGLAPPPLLLSSSNELYLTFSSDASVSRRGFQAHYTSLCGGRLTAESTPGHIYSHATFSDSKYGKNQDCSWIVRAKSPGRGVRIQFSTFNIESEEGCQYDYIEIYDGPEATLERLVGRFCGDTSPEVITSTGPELLLIMHTDNAEEEKGFVAEYREAPRSSSTKRTFVSKTRHSPLEEPIHDRNE.

The signal sequence occupies residues 1-30; it reads MRFSANIAIIVNIIFLFIVVEFVLPTFIRS. The region spanning 48–247 is the Peptidase M12A domain; it reads AATAKKERIW…RQTKKLYKCA (200 aa). N69 and N87 each carry an N-linked (GlcNAc...) asparagine glycan. 4 disulfide bridges follow: C90/C246, C111/C133, C113/C114, and C249/C268. Residue H141 coordinates Zn(2+). E142 is a catalytic residue. Zn(2+) is bound by residues H145 and H151. CUB domains are found at residues 249–359 and 360–476; these read CGGT…YAIC and GGPI…FTKE. N283 is a glycosylation site (N-linked (GlcNAc...) asparagine). 6 disulfides stabilise this stretch: C359-C385, C412-C439, C480-C491, C487-C500, C502-C515, and C519-C545. An EGF-like 1; calcium-binding domain is found at 477–516; the sequence is LNECATDKNICHHYCVNTVGGFKCACRVGYSLSSNGFSCD. The CUB 3 domain maps to 519–625; that stretch reads CGGYLKASNG…DGFFANFIAD (107 aa). N527 and N560 each carry an N-linked (GlcNAc...) asparagine glycan. 8 disulfide bridges follow: C573/C587, C629/C640, C636/C649, C651/C664, C669/C695, C722/C744, C782/C812, and C840/C863. Residues 626 to 665 form the EGF-like 2; calcium-binding domain; that stretch reads FDECQNDNAGCEHTCQNRLGSYVCTCNPGYILAEDKHNCK. CUB domains follow at residues 669 to 781 and 782 to 900; these read CFFE…YTSL and CGGR…YREA. N694 carries an N-linked (GlcNAc...) asparagine glycan. Residues 895–928 are disordered; the sequence is AEYREAPRSSSTKRTFVSKTRHSPLEEPIHDRNE. Over residues 902–912 the composition is skewed to polar residues; it reads RSSSTKRTFVS. Positions 917–928 are enriched in basic and acidic residues; sequence SPLEEPIHDRNE.

The cofactor is Zn(2+). In terms of tissue distribution, expressed in pharyngeal, vulva and body wall muscles, intestine and several neurons.

It is found in the secreted. Metalloprotease. The chain is Zinc metalloproteinase nas-39 from Caenorhabditis elegans.